Consider the following 726-residue polypeptide: Long-chain-alcohol oxidase FAO4A (726 aa).

Residues 103–119 traverse the membrane as a helical segment; that stretch reads ILLNWSSSYFSLLRMLF. 224-239 is an FAD binding site; sequence CDAVVVGSGSGGGVAA. Catalysis depends on His659, which acts as the Proton acceptor.

Belongs to the GMC oxidoreductase family.

Its subcellular location is the membrane. It catalyses the reaction a long-chain primary fatty alcohol + O2 = a long-chain fatty aldehyde + H2O2. Its function is as follows. Long-chain fatty alcohol oxidase involved in the omega-oxidation pathway of lipid degradation. The chain is Long-chain-alcohol oxidase FAO4A (FAO4A) from Arabidopsis thaliana (Mouse-ear cress).